We begin with the raw amino-acid sequence, 200 residues long: Vacuolar iron transporter homolog 1 (200 aa).

At 1–34 (MESHNVSNSLNLDMEMDQEKAFDYSKRAQWLRAA) the chain is on the cytoplasmic side. The chain crosses the membrane as a helical span at residues 35 to 55 (VLGANDGLVSTASLMMGVGAV). At 56 to 62 (KQDVKVM) the chain is on the vacuolar side. A helical membrane pass occupies residues 63 to 83 (ILSGFAGLVAGACSMAIGEFV). Residues 84-116 (SVYSQYDIEVAQMKRENGGQVEKEKLPSPMQAA) lie on the Cytoplasmic side of the membrane. A helical transmembrane segment spans residues 117 to 137 (AASALAFSLGAIVPLMAAAFV). The Vacuolar segment spans residues 138–143 (KDYHVR). The chain crosses the membrane as a helical span at residues 144–164 (IGAIVAAVTLALVMFGWLGAV). The Cytoplasmic portion of the chain corresponds to 165-176 (LGKAPVFKSSAR). A helical membrane pass occupies residues 177-197 (VLIGGWLAMAVTFGLTKLIGT). Topologically, residues 198–200 (HSL) are vacuolar.

The protein belongs to the CCC1 family. As to expression, expressed in the vascular bundles of the shoot and the stele of the root. Expressed in inflorescences and at lower levels in leaves.

Its subcellular location is the vacuole membrane. The catalysed reaction is Fe(2+)(in) = Fe(2+)(out). Vacuolar iron transporter involved in the transfer of iron ions from the cytosol to the vacuole for intracellular iron storage. Involved in regulation of cellular iron homeostasis. Vacuolar iron storage is required for seed embryo and seedling development. The sequence is that of Vacuolar iron transporter homolog 1 from Arabidopsis thaliana (Mouse-ear cress).